Reading from the N-terminus, the 637-residue chain is 1,4-alpha-glucan branching enzyme GlgB (637 aa).

D307 (nucleophile) is an active-site residue. The active-site Proton donor is the E361.

Belongs to the glycosyl hydrolase 13 family. GlgB subfamily. Monomer.

It carries out the reaction Transfers a segment of a (1-&gt;4)-alpha-D-glucan chain to a primary hydroxy group in a similar glucan chain.. Its pathway is glycan biosynthesis; glycogen biosynthesis. In terms of biological role, catalyzes the formation of the alpha-1,6-glucosidic linkages in glycogen by scission of a 1,4-alpha-linked oligosaccharide from growing alpha-1,4-glucan chains and the subsequent attachment of the oligosaccharide to the alpha-1,6 position. In Oceanobacillus iheyensis (strain DSM 14371 / CIP 107618 / JCM 11309 / KCTC 3954 / HTE831), this protein is 1,4-alpha-glucan branching enzyme GlgB.